The primary structure comprises 562 residues: MRSDMIKKGDHQAPARSLLHATGALKSPTDMNKPFVAICNSYIDIVPGHVHLRELADIAKEAIREAGAIPFEFNTIGVDDGIAMGHIGMRYSLPSREIIADAAETVINAHWFDGVFYIPNCDKITPGMILAAMRTNVPAIFCSGGPMKAGLSAHGKALTLSSMFEAVGAFKEGSISKEEFLDMEQNACPTCGSCAGMFTANSMNCLMEVLGLALPYNGTALAVSDQRREMIRQAAFKLVENIKNDLKPRDIVTREAIDDAFALDMAMGGSTNTVLHTLAIANEAGIDYDLERINAIAKRTPYLSKIAPSSSYSMHDVHEAGGVPAIINELMKKDGTLHPDRITVTGKTLRENNEGKEIKNFDVIHSLDAPYDAQGGLSILFGNIAPKGAVIKVGGVDPSIKTFTGKAICFNSHDEAVEAIDNRTVRAGHVVVIRYEGPKGGPGMPEMLAPTSSIVGRGLGKDVALITDGRFSGATRGIAVGHISPEAASGGPIALIEDGDEITIDLTNRTLKVNQPEDVLARRRESLTPFKAKVKTGYLARYTALVTSANTGGVMQVPENLI.

Position 80 (D80) interacts with Mg(2+). C121 is a binding site for [2Fe-2S] cluster. The Mg(2+) site is built by D122 and K123. At K123 the chain carries N6-carboxylysine. A [2Fe-2S] cluster-binding site is contributed by C194. E446 is a binding site for Mg(2+). S472 functions as the Proton acceptor in the catalytic mechanism.

The protein belongs to the IlvD/Edd family. As to quaternary structure, homodimer. Requires [2Fe-2S] cluster as cofactor. Mg(2+) serves as cofactor.

It carries out the reaction (2R)-2,3-dihydroxy-3-methylbutanoate = 3-methyl-2-oxobutanoate + H2O. It catalyses the reaction (2R,3R)-2,3-dihydroxy-3-methylpentanoate = (S)-3-methyl-2-oxopentanoate + H2O. Its pathway is amino-acid biosynthesis; L-isoleucine biosynthesis; L-isoleucine from 2-oxobutanoate: step 3/4. It functions in the pathway amino-acid biosynthesis; L-valine biosynthesis; L-valine from pyruvate: step 3/4. In terms of biological role, functions in the biosynthesis of branched-chain amino acids. Catalyzes the dehydration of (2R,3R)-2,3-dihydroxy-3-methylpentanoate (2,3-dihydroxy-3-methylvalerate) into 2-oxo-3-methylpentanoate (2-oxo-3-methylvalerate) and of (2R)-2,3-dihydroxy-3-methylbutanoate (2,3-dihydroxyisovalerate) into 2-oxo-3-methylbutanoate (2-oxoisovalerate), the penultimate precursor to L-isoleucine and L-valine, respectively. The protein is Dihydroxy-acid dehydratase of Staphylococcus aureus (strain MRSA252).